A 152-amino-acid polypeptide reads, in one-letter code: 3-hydroxyacyl-[acyl-carrier-protein] dehydratase FabZ (152 aa).

The active site involves H57.

This sequence belongs to the thioester dehydratase family. FabZ subfamily.

The protein localises to the cytoplasm. It carries out the reaction a (3R)-hydroxyacyl-[ACP] = a (2E)-enoyl-[ACP] + H2O. Its function is as follows. Involved in unsaturated fatty acids biosynthesis. Catalyzes the dehydration of short chain beta-hydroxyacyl-ACPs and long chain saturated and unsaturated beta-hydroxyacyl-ACPs. The polypeptide is 3-hydroxyacyl-[acyl-carrier-protein] dehydratase FabZ (Pasteurella multocida (strain Pm70)).